A 371-amino-acid polypeptide reads, in one-letter code: Peptide chain release factor 2 (371 aa).

Gln-252 is modified (N5-methylglutamine).

It belongs to the prokaryotic/mitochondrial release factor family. Methylated by PrmC. Methylation increases the termination efficiency of RF2.

It is found in the cytoplasm. Peptide chain release factor 2 directs the termination of translation in response to the peptide chain termination codons UGA and UAA. The polypeptide is Peptide chain release factor 2 (Staphylococcus epidermidis (strain ATCC 35984 / DSM 28319 / BCRC 17069 / CCUG 31568 / BM 3577 / RP62A)).